The following is a 468-amino-acid chain: 6-phosphogluconate dehydrogenase, decarboxylating (468 aa).

Residues 10-15 (GMAVMG), 33-35 (NRT), 74-76 (VQS), and asparagine 102 contribute to the NADP(+) site. Substrate-binding positions include asparagine 102 and 128-130 (SGG). Catalysis depends on lysine 182, which acts as the Proton acceptor. Residue 185–186 (HN) coordinates substrate. Catalysis depends on glutamate 189, which acts as the Proton donor. Substrate-binding residues include tyrosine 190, lysine 259, arginine 286, arginine 445, and histidine 451.

This sequence belongs to the 6-phosphogluconate dehydrogenase family. Homodimer.

The enzyme catalyses 6-phospho-D-gluconate + NADP(+) = D-ribulose 5-phosphate + CO2 + NADPH. The protein operates within carbohydrate degradation; pentose phosphate pathway; D-ribulose 5-phosphate from D-glucose 6-phosphate (oxidative stage): step 3/3. Catalyzes the oxidative decarboxylation of 6-phosphogluconate to ribulose 5-phosphate and CO(2), with concomitant reduction of NADP to NADPH. This Buchnera aphidicola subsp. Acyrthosiphon pisum (strain APS) (Acyrthosiphon pisum symbiotic bacterium) protein is 6-phosphogluconate dehydrogenase, decarboxylating (gnd).